A 168-amino-acid chain; its full sequence is Alpha-N-acetylgalactosamine-specific lectin (168 aa).

Residues 1–18 form the signal peptide; the sequence is MAFFRALCFVLLVGFAAA. The region spanning 38-163 is the C-type lectin domain; the sequence is YNGNCYRYFG…CSRAFAYVCK (126 aa). Cystine bridges form between Cys59-Cys162 and Cys136-Cys154.

Monomer, homodimer and homooligomer.

In terms of biological role, alpha-N-acetylgalactosamine-specific lectin. The oligomeric form has Ca(2+)-dependent hemagglutination activity towards sheep erythrocytes. Its hemagglutination activity is inhibited by various monosaccharides, oligosaccharides and glycopeptides, including inhibition by GalNAc, blood group A trisaccharide, Tn antigen, mucin and asialomucin. This Patiria pectinifera (Starfish) protein is Alpha-N-acetylgalactosamine-specific lectin.